The chain runs to 418 residues: Glucose-1-phosphate adenylyltransferase (418 aa).

Residues Tyr-107, Gly-172, 187-188 (EK), and Ser-205 contribute to the alpha-D-glucose 1-phosphate site.

This sequence belongs to the bacterial/plant glucose-1-phosphate adenylyltransferase family. In terms of assembly, homotetramer.

The enzyme catalyses alpha-D-glucose 1-phosphate + ATP + H(+) = ADP-alpha-D-glucose + diphosphate. It functions in the pathway glycan biosynthesis; glycogen biosynthesis. Functionally, involved in the biosynthesis of ADP-glucose, a building block required for the elongation reactions to produce glycogen. Catalyzes the reaction between ATP and alpha-D-glucose 1-phosphate (G1P) to produce pyrophosphate and ADP-Glc. In Gemmatimonas aurantiaca (strain DSM 14586 / JCM 11422 / NBRC 100505 / T-27), this protein is Glucose-1-phosphate adenylyltransferase.